The primary structure comprises 314 residues: PDZ domain-containing protein GIPC2 (314 aa).

Positions 1 to 12 (MPLGLRGKKKAA) are enriched in basic residues. The tract at residues 1 to 36 (MPLGLRGKKKAAKSKETARLVEGERSGGSQGVPGPP) is disordered. Basic and acidic residues predominate over residues 13 to 25 (KSKETARLVEGER). The PDZ domain maps to 117-197 (EVNVYKSEDS…EELFTLQLIE (81 aa)).

The protein belongs to the GIPC family. As to quaternary structure, probably interacts with SEMA5A.

The protein resides in the cytoplasm. The sequence is that of PDZ domain-containing protein GIPC2 (Gipc2) from Rattus norvegicus (Rat).